The chain runs to 147 residues: SsrA-binding protein (147 aa).

The interval 119-147 (AKGKKQHDKRESEKQKEWERDKQRLMRPK) is disordered. Residues 126–147 (DKRESEKQKEWERDKQRLMRPK) are compositionally biased toward basic and acidic residues.

This sequence belongs to the SmpB family.

It localises to the cytoplasm. In terms of biological role, required for rescue of stalled ribosomes mediated by trans-translation. Binds to transfer-messenger RNA (tmRNA), required for stable association of tmRNA with ribosomes. tmRNA and SmpB together mimic tRNA shape, replacing the anticodon stem-loop with SmpB. tmRNA is encoded by the ssrA gene; the 2 termini fold to resemble tRNA(Ala) and it encodes a 'tag peptide', a short internal open reading frame. During trans-translation Ala-aminoacylated tmRNA acts like a tRNA, entering the A-site of stalled ribosomes, displacing the stalled mRNA. The ribosome then switches to translate the ORF on the tmRNA; the nascent peptide is terminated with the 'tag peptide' encoded by the tmRNA and targeted for degradation. The ribosome is freed to recommence translation, which seems to be the essential function of trans-translation. The chain is SsrA-binding protein from Nitrosospira multiformis (strain ATCC 25196 / NCIMB 11849 / C 71).